The sequence spans 411 residues: Multifunctional CCA protein (411 aa).

ATP contacts are provided by G8 and R11. Residues G8 and R11 each coordinate CTP. Mg(2+) is bound by residues D21 and D23. The ATP site is built by R91, R143, and R146. R91, R143, and R146 together coordinate CTP. The HD domain maps to 232-333 (TGVHVMMVID…MRLLERCDAL (102 aa)).

This sequence belongs to the tRNA nucleotidyltransferase/poly(A) polymerase family. Bacterial CCA-adding enzyme type 1 subfamily. In terms of assembly, monomer. Can also form homodimers and oligomers. Requires Mg(2+) as cofactor. Ni(2+) serves as cofactor.

The enzyme catalyses a tRNA precursor + 2 CTP + ATP = a tRNA with a 3' CCA end + 3 diphosphate. The catalysed reaction is a tRNA with a 3' CCA end + 2 CTP + ATP = a tRNA with a 3' CCACCA end + 3 diphosphate. Catalyzes the addition and repair of the essential 3'-terminal CCA sequence in tRNAs without using a nucleic acid template. Adds these three nucleotides in the order of C, C, and A to the tRNA nucleotide-73, using CTP and ATP as substrates and producing inorganic pyrophosphate. tRNA 3'-terminal CCA addition is required both for tRNA processing and repair. Also involved in tRNA surveillance by mediating tandem CCA addition to generate a CCACCA at the 3' terminus of unstable tRNAs. While stable tRNAs receive only 3'-terminal CCA, unstable tRNAs are marked with CCACCA and rapidly degraded. The polypeptide is Multifunctional CCA protein (Cupriavidus necator (strain ATCC 17699 / DSM 428 / KCTC 22496 / NCIMB 10442 / H16 / Stanier 337) (Ralstonia eutropha)).